A 269-amino-acid chain; its full sequence is Signal recognition particle receptor subunit beta (269 aa).

The helical transmembrane segment at 35 to 55 (LLSVAVAVLAVLLTLVFWKFI) threads the bilayer. GTP-binding positions include 69-77 (GLCDSGKTL) and 90-93 (TQTS). Ser-110 is subject to Phosphoserine. Gly-118 is a GTP binding site. Residue Thr-212 is modified to Phosphothreonine. Position 246 (Ala-246) interacts with GTP.

It belongs to the SRP receptor beta subunit family. Heterodimer with SRPRA.

The protein resides in the endoplasmic reticulum membrane. Component of the signal recognition particle (SRP) complex receptor (SR). Ensures, in conjunction with the SRP complex, the correct targeting of the nascent secretory proteins to the endoplasmic reticulum membrane system. May mediate the membrane association of SR. The polypeptide is Signal recognition particle receptor subunit beta (Srprb) (Rattus norvegicus (Rat)).